The sequence spans 262 residues: Ribosomal RNA small subunit methyltransferase A (262 aa).

S-adenosyl-L-methionine contacts are provided by asparagine 14, leucine 16, glycine 41, glutamate 62, aspartate 87, and asparagine 109.

It belongs to the class I-like SAM-binding methyltransferase superfamily. rRNA adenine N(6)-methyltransferase family. RsmA subfamily.

Its subcellular location is the cytoplasm. It carries out the reaction adenosine(1518)/adenosine(1519) in 16S rRNA + 4 S-adenosyl-L-methionine = N(6)-dimethyladenosine(1518)/N(6)-dimethyladenosine(1519) in 16S rRNA + 4 S-adenosyl-L-homocysteine + 4 H(+). Functionally, specifically dimethylates two adjacent adenosines (A1518 and A1519) in the loop of a conserved hairpin near the 3'-end of 16S rRNA in the 30S particle. May play a critical role in biogenesis of 30S subunits. This chain is Ribosomal RNA small subunit methyltransferase A, found in Francisella tularensis subsp. holarctica (strain FTNF002-00 / FTA).